A 672-amino-acid chain; its full sequence is MKDIKNYILKLQDEIRYHAYLYHTLNSPKISDEKYDFLVIELQRLEKKCKYSVRFKDSPTQSVGSENLPEFKKFSHITPMLSLNNVFIKNDFLKFYKKIVNNITVEKIFFCSELKFDGVAINLIYINGLLFRAVTRGNGYEGEDVTSNVNMISSVPKKLIGIDIPETLEVRGEIFMLKSDFKKLNVRLTKFKKKLFSNSRNAASGSLRHKNAKVTELRSLTFYCYGCGYCSYENFTDSHFLRLKKLKSWGFPISDYNFLHSSYDEILRFYNFIQNERYFLNFNIDGIVIKVDSICLQKSLSTTSKAPRWAVAYKFSDKIKITTIMNILYQVGRTGVITPVAQVTPIYISGVLIKKVSLHNFNEIRRLNLNIGDSVFIKRSGDVIPHIIEVASKCKLQRNEDISIPKFCPECGSKLKVDSFSNIKIRCMAGLKCLSQFKKLLHYFCSKKGLNILGLGPKIIDKLVDLGYVSDLSDIFDLNVSLLTKVENIGIIKSQNIIRSINNSKNVSFSKFLCSLGIFEVGSIVARSISNYFFTLDKFMNSSKEEFLLINGIGVNIADNLYNFINDEFNKNIIFKLSKKLNISSDINAIIDNNNTLFRKKIVFSGSFSNFSRSKIIELSKKLGIIVVSSVSKSVDYIIIGKKPGRKLIKAKKFSIPGIYEKEFLNIINVYL.

NAD(+)-binding positions include 32–36 (DEKYD), 82–83 (SL), and glutamate 113. The N6-AMP-lysine intermediate role is filled by lysine 115. NAD(+) contacts are provided by arginine 136, glutamate 173, lysine 290, and lysine 314. 4 residues coordinate Zn(2+): cysteine 408, cysteine 411, cysteine 427, and cysteine 433. The region spanning 592 to 672 (DNNNTLFRKK…EFLNIINVYL (81 aa)) is the BRCT domain.

The protein belongs to the NAD-dependent DNA ligase family. LigA subfamily. The cofactor is Mg(2+). Mn(2+) serves as cofactor.

The enzyme catalyses NAD(+) + (deoxyribonucleotide)n-3'-hydroxyl + 5'-phospho-(deoxyribonucleotide)m = (deoxyribonucleotide)n+m + AMP + beta-nicotinamide D-nucleotide.. Functionally, DNA ligase that catalyzes the formation of phosphodiester linkages between 5'-phosphoryl and 3'-hydroxyl groups in double-stranded DNA using NAD as a coenzyme and as the energy source for the reaction. It is essential for DNA replication and repair of damaged DNA. In Buchnera aphidicola subsp. Baizongia pistaciae (strain Bp), this protein is DNA ligase.